A 683-amino-acid chain; its full sequence is Protein zntD (683 aa).

3 consecutive transmembrane segments (helical) span residues 12–32 (IIST…PYWM), 42–62 (LSWS…LHLF), and 79–99 (PFAA…ELII). Residues 120 to 129 (VHLSHGHSHH) show a composition bias toward basic residues. Disordered regions lie at residues 120–180 (VHLS…TTTT), 299–325 (GFSN…NNNN), 364–390 (CSND…TPNT), and 451–489 (IGNS…NNNN). Gly residues predominate over residues 137–149 (GNPGSGVGIGMGS). 2 stretches are compositionally biased toward low complexity: residues 160–180 (TTSP…TTTT) and 302–325 (NNNN…NNNN). Residues 451-465 (IGNSGNIGSNNNNNN) show a composition bias toward low complexity. Residues 466–475 (NGGGGGGGGN) show a composition bias toward gly residues. The span at 476 to 489 (SNIDYNDNEENNNN) shows a compositional bias: low complexity. Transmembrane regions (helical) follow at residues 534–554 (ILLP…EGLA), 564–584 (VFDI…ALGI), 600–620 (FLLV…GMVI), 631–651 (PPIL…VEII), and 662–682 (ILIK…VAIW).

The protein belongs to the ZIP transporter (TC 2.A.5) family.

Its subcellular location is the membrane. In terms of biological role, may transport divalent cations. May participate, with dstA, in the regulation of the differentiation of stalk cells during development. The chain is Protein zntD (zntD) from Dictyostelium discoideum (Social amoeba).